Consider the following 670-residue polypeptide: Major fimbrium tip subunit FimD (670 aa).

A signal peptide spans 1–24 (MRTNRILNIICPPILFLLVGFLFG). A lipid anchor (N-palmitoyl cysteine) is attached at C25. The S-diacylglycerol cysteine moiety is linked to residue C25. Residues 25 to 50 (CVREDIESDMNETSSLFLQVQPYNQR) constitute a propeptide that is removed on maturation.

The protein belongs to the FimD family. Fimbriae are composed of a major, structural subunit and the minor components FimC, FimD and FimE. Identified in a complex composed of FimC, FimD and FimE (in vitro). The complex interacts with host extracellular matrix proteins, including fibronectin and type I collagen. Interacts with host CXCR4.

The protein localises to the fimbrium. It is found in the cell outer membrane. In terms of biological role, probably a component of the fimbrium tip. These long, filamentous pili are attached to the cell surface; they mediate biofilm formation, adhesion onto host cells and onto other bacteria that are part of the oral microbiome. They play an important role in invasion of periodontal tissues and are major virulence factors. FimC, FimD and FimE contribute to interaction with host CXCR4 and thereby down-regulate the TLR2-mediated host immune response. This Porphyromonas gingivalis (strain ATCC 33277 / DSM 20709 / CIP 103683 / JCM 12257 / NCTC 11834 / 2561) protein is Major fimbrium tip subunit FimD.